The following is a 379-amino-acid chain: Serpin B5 (379 aa).

N-linked (GlcNAc...) asparagine glycosylation is found at N133, N176, and N361.

Belongs to the serpin family. Ov-serpin subfamily.

The protein localises to the secreted. Its subcellular location is the extracellular space. Its function is as follows. May not exhibit serine protease inhibitory activity. The polypeptide is Serpin B5 (serpinb5) (Xenopus tropicalis (Western clawed frog)).